The following is a 49-amino-acid chain: Osteocalcin (49 aa).

Residues 1–47 enclose the Gla domain; it reads YLDHGLGAPAPYPDPLEPKREVCELNPDCDELADHIGFQEAYRRFYG. Pro-9 is modified (hydroxyproline). Ca(2+) contacts are provided by Glu-17, Glu-21, Glu-24, and Asp-30. 4-carboxyglutamate is present on residues Glu-17, Glu-21, and Glu-24. A disulfide bond links Cys-23 and Cys-29.

Belongs to the osteocalcin/matrix Gla protein family. In terms of processing, gamma-carboxyglutamic acid residues are formed by vitamin K dependent carboxylation. These residues are essential for the binding of calcium.

The protein resides in the secreted. In terms of biological role, the carboxylated form is one of the main organic components of the bone matrix, which constitutes 1-2% of the total bone protein: it acts as a negative regulator of bone formation and is required to limit bone formation without impairing bone resorption or mineralization. The carboxylated form binds strongly to apatite and calcium. Its function is as follows. The uncarboxylated form acts as a hormone secreted by osteoblasts, which regulates different cellular processes, such as energy metabolism, male fertility and brain development. Regulates of energy metabolism by acting as a hormone favoring pancreatic beta-cell proliferation, insulin secretion and sensitivity and energy expenditure. Uncarboxylated osteocalcin hormone also promotes testosterone production in the testes: acts as a ligand for G protein-coupled receptor GPRC6A at the surface of Leydig cells, initiating a signaling response that promotes the expression of enzymes required for testosterone synthesis in a CREB-dependent manner. Also acts as a regulator of brain development: osteocalcin hormone crosses the blood-brain barrier and acts as a ligand for GPR158 on neurons, initiating a signaling response that prevents neuronal apoptosis in the hippocampus, favors the synthesis of all monoamine neurotransmitters and inhibits that of gamma-aminobutyric acid (GABA). Osteocalcin also crosses the placenta during pregnancy and maternal osteocalcin is required for fetal brain development. In Bison priscus (Steppe wisent), this protein is Osteocalcin (BGLAP).